The chain runs to 328 residues: Endochitinase (328 aa).

The N-terminal stretch at 1–26 (MRRHKEVNFVAYLLFSLLVLVSAALA) is a signal peptide. One can recognise a Chitin-binding type-1 domain in the interval 27 to 68 (QNCGSQGGGKACASGQCCSKFGWCGNTNDYCGSGNCQSQCPG). Intrachain disulfides connect C29–C44, C38–C50, C43–C57, C62–C66, C100–C162, C174–C182, and C281–C313. Catalysis depends on E144, which acts as the Proton donor. A propeptide spans 322-328 (ALLVDTL) (removed in mature form).

It belongs to the glycosyl hydrolase 19 family. Chitinase class I subfamily.

It localises to the vacuole. The enzyme catalyses Random endo-hydrolysis of N-acetyl-beta-D-glucosaminide (1-&gt;4)-beta-linkages in chitin and chitodextrins.. Its function is as follows. Defense against chitin-containing fungal pathogens. The polypeptide is Endochitinase (Solanum tuberosum (Potato)).